Here is a 237-residue protein sequence, read N- to C-terminus: Uridylate kinase (237 aa).

9-12 (KFSG) contacts ATP. Positions 17-22 (GEAGYG) are involved in allosteric activation by GTP. Glycine 51 provides a ligand contact to UMP. 2 residues coordinate ATP: glycine 52 and arginine 56. UMP contacts are provided by residues aspartate 72 and 133–140 (TGNPFFTT). ATP contacts are provided by threonine 160, tyrosine 166, and aspartate 169.

This sequence belongs to the UMP kinase family. Homohexamer.

The protein localises to the cytoplasm. The enzyme catalyses UMP + ATP = UDP + ADP. The protein operates within pyrimidine metabolism; CTP biosynthesis via de novo pathway; UDP from UMP (UMPK route): step 1/1. Its activity is regulated as follows. Allosterically activated by GTP. Inhibited by UTP. In terms of biological role, catalyzes the reversible phosphorylation of UMP to UDP. This chain is Uridylate kinase, found in Sulfurimonas denitrificans (strain ATCC 33889 / DSM 1251) (Thiomicrospira denitrificans (strain ATCC 33889 / DSM 1251)).